The chain runs to 492 residues: Catalase isozyme 1 (492 aa).

Residues His-65 and Asn-138 contribute to the active site. Tyr-348 is a binding site for heme.

Belongs to the catalase family. In terms of assembly, homotetramer. It depends on heme as a cofactor.

The protein localises to the peroxisome. It carries out the reaction 2 H2O2 = O2 + 2 H2O. Its function is as follows. Occurs in almost all aerobically respiring organisms and serves to protect cells from the toxic effects of hydrogen peroxide. The sequence is that of Catalase isozyme 1 (CAT1) from Solanum lycopersicum (Tomato).